Consider the following 497-residue polypeptide: Serine hydroxymethyltransferase (497 aa).

Residues Leu-176 and 180-182 (GHL) each bind (6S)-5,6,7,8-tetrahydrofolate. Lys-289 is subject to N6-(pyridoxal phosphate)lysine.

This sequence belongs to the SHMT family. As to quaternary structure, homodimer. Pyridoxal 5'-phosphate is required as a cofactor.

Its subcellular location is the cytoplasm. The catalysed reaction is (6R)-5,10-methylene-5,6,7,8-tetrahydrofolate + glycine + H2O = (6S)-5,6,7,8-tetrahydrofolate + L-serine. Its pathway is one-carbon metabolism; tetrahydrofolate interconversion. It functions in the pathway amino-acid biosynthesis; glycine biosynthesis; glycine from L-serine: step 1/1. Its function is as follows. Catalyzes the reversible interconversion of serine and glycine with tetrahydrofolate (THF) serving as the one-carbon carrier. This reaction serves as the major source of one-carbon groups required for the biosynthesis of purines, thymidylate, methionine, and other important biomolecules. Also exhibits THF-independent aldolase activity toward beta-hydroxyamino acids, producing glycine and aldehydes, via a retro-aldol mechanism. The sequence is that of Serine hydroxymethyltransferase from Chlamydia trachomatis serovar A (strain ATCC VR-571B / DSM 19440 / HAR-13).